We begin with the raw amino-acid sequence, 496 residues long: Glutamyl-tRNA(Gln) amidotransferase subunit A (496 aa).

Active-site charge relay system residues include Lys75 and Ser150. Ser174 (acyl-ester intermediate) is an active-site residue.

It belongs to the amidase family. GatA subfamily. In terms of assembly, heterotrimer of A, B and C subunits.

The enzyme catalyses L-glutamyl-tRNA(Gln) + L-glutamine + ATP + H2O = L-glutaminyl-tRNA(Gln) + L-glutamate + ADP + phosphate + H(+). In terms of biological role, allows the formation of correctly charged Gln-tRNA(Gln) through the transamidation of misacylated Glu-tRNA(Gln) in organisms which lack glutaminyl-tRNA synthetase. The reaction takes place in the presence of glutamine and ATP through an activated gamma-phospho-Glu-tRNA(Gln). The polypeptide is Glutamyl-tRNA(Gln) amidotransferase subunit A (Burkholderia pseudomallei (strain 668)).